Here is a 644-residue protein sequence, read N- to C-terminus: ATP-dependent zinc metalloprotease FtsH (644 aa).

Residues 1–11 lie on the Stromal side of the membrane; that stretch reads MNDNKNNTVRN. The helical transmembrane segment at 12–32 threads the bilayer; it reads LLIGIALLSGISLTAKKFDLI. Residues 33–128 lie on the Lumenal side of the membrane; that stretch reads GVQGSESGKN…FDAHPAEQKN (96 aa). The helical transmembrane segment at 129–149 threads the bilayer; that stretch reads IFVNILSNILLPIIFITGLVY. Over 150 to 644 the chain is Stromal; that stretch reads LFQNSENFGG…KNIPYVSKFN (495 aa). 226–233 lines the ATP pocket; sequence GPPGTGKT. A Zn(2+)-binding site is contributed by H447. E448 is a catalytic residue. 2 residues coordinate Zn(2+): H451 and D525.

In the central section; belongs to the AAA ATPase family. It in the C-terminal section; belongs to the peptidase M41 family. As to quaternary structure, homohexamer. Requires Zn(2+) as cofactor.

It localises to the plastid. The protein localises to the chloroplast thylakoid membrane. Functionally, acts as a processive, ATP-dependent zinc metallopeptidase. This Trieres chinensis (Marine centric diatom) protein is ATP-dependent zinc metalloprotease FtsH.